A 484-amino-acid chain; its full sequence is Threonine synthase-like 2 (484 aa).

At Lys113 the chain carries N6-(pyridoxal phosphate)lysine.

Belongs to the threonine synthase family. The cofactor is pyridoxal 5'-phosphate.

The protein localises to the secreted. Its function is as follows. Acts as a catabolic phospho-lyase on both gamma- and beta-phosphorylated substrates. Degrades O-phospho-threonine (PThr) to alpha-ketobutyrate, ammonia and phosphate. Functionally, potent inducer of osteoblastic production of IL6. May act to exacerbate inflammation and/or bone turnover under inflammatory conditions. The sequence is that of Threonine synthase-like 2 (THNSL2) from Homo sapiens (Human).